A 235-amino-acid polypeptide reads, in one-letter code: Aspartate/glutamate leucyltransferase (235 aa).

It belongs to the R-transferase family. Bpt subfamily.

The protein localises to the cytoplasm. The enzyme catalyses N-terminal L-glutamyl-[protein] + L-leucyl-tRNA(Leu) = N-terminal L-leucyl-L-glutamyl-[protein] + tRNA(Leu) + H(+). It carries out the reaction N-terminal L-aspartyl-[protein] + L-leucyl-tRNA(Leu) = N-terminal L-leucyl-L-aspartyl-[protein] + tRNA(Leu) + H(+). Functionally, functions in the N-end rule pathway of protein degradation where it conjugates Leu from its aminoacyl-tRNA to the N-termini of proteins containing an N-terminal aspartate or glutamate. The polypeptide is Aspartate/glutamate leucyltransferase (Pseudomonas entomophila (strain L48)).